Reading from the N-terminus, the 1503-residue chain is Rho GTPase-activating protein 5 (1503 aa).

FF domains lie at 267-325 (QLVV…HIEQ), 366-420 (KLME…HVQH), 427-481 (RIEM…HQRE), and 482-548 (IVEK…HIGF). Tyr550 carries the post-translational modification 3'-nitrotyrosine. 2 positions are modified to phosphoserine: Ser590 and Ser765. The region spanning 590–763 (STNIDKVNLF…LESVKHNLDV (174 aa)) is the pG1 pseudoGTPase domain. Positions 779–944 (RIVMCAMCGD…FSDVLEKKNM (166 aa)) constitute a pG2 pseudoGTPase domain. Residues Ser951 and Ser968 each carry the phosphoserine modification. Disordered regions lie at residues 975–1004 (YNNY…LPTP), 1022–1050 (HSTP…PKTN), and 1069–1091 (NPRK…SDNY). Residues 1036 to 1045 (VPPPIKPKPV) are compositionally biased toward pro residues. Ser1115 carries the phosphoserine modification. Disordered regions lie at residues 1129–1157 (NTQG…YKYK) and 1169–1255 (YRRT…TRRN). Over residues 1141–1151 (RTSKGHGERRP) the composition is skewed to basic and acidic residues. A phosphoserine mark is found at Ser1196, Ser1203, and Ser1219. The region spanning 1263–1450 (MPLQDLVTAE…TFIQQCQFFF (188 aa)) is the Rho-GAP domain.

As to quaternary structure, may interact with RASA1/p120GAP. As to expression, expressed in spinal cord, cerebellum, kidney, testis and lung.

It localises to the cytoplasm. Its subcellular location is the cell membrane. GTPase-activating protein for Rho family members. The polypeptide is Rho GTPase-activating protein 5 (Arhgap5) (Mus musculus (Mouse)).